We begin with the raw amino-acid sequence, 809 residues long: Phenylalanine--tRNA ligase beta subunit (809 aa).

The tRNA-binding domain occupies 39 to 154 (APPTSKIVVG…EDTPVGQDIR (116 aa)). In terms of domain architecture, B5 spans 405–480 (PQRAPVKMRV…RIYGFEKIPA (76 aa)). Positions 458, 464, 467, and 468 each coordinate Mg(2+). Positions 707-808 (SKFPPVRRDI…RMARAGARLR (102 aa)) constitute an FDX-ACB domain.

It belongs to the phenylalanyl-tRNA synthetase beta subunit family. Type 1 subfamily. In terms of assembly, tetramer of two alpha and two beta subunits. It depends on Mg(2+) as a cofactor.

Its subcellular location is the cytoplasm. It catalyses the reaction tRNA(Phe) + L-phenylalanine + ATP = L-phenylalanyl-tRNA(Phe) + AMP + diphosphate + H(+). This chain is Phenylalanine--tRNA ligase beta subunit, found in Burkholderia lata (strain ATCC 17760 / DSM 23089 / LMG 22485 / NCIMB 9086 / R18194 / 383).